The following is a 226-amino-acid chain: Thymidylate kinase (226 aa).

9 to 16 (GPEGSGKS) contacts ATP.

It belongs to the thymidylate kinase family.

The enzyme catalyses dTMP + ATP = dTDP + ADP. Phosphorylation of dTMP to form dTDP in both de novo and salvage pathways of dTTP synthesis. The sequence is that of Thymidylate kinase from Roseiflexus sp. (strain RS-1).